Here is a 277-residue protein sequence, read N- to C-terminus: Bis(5'-nucleosyl)-tetraphosphatase, symmetrical (277 aa).

The protein belongs to the Ap4A hydrolase family.

The enzyme catalyses P(1),P(4)-bis(5'-adenosyl) tetraphosphate + H2O = 2 ADP + 2 H(+). In terms of biological role, hydrolyzes diadenosine 5',5'''-P1,P4-tetraphosphate to yield ADP. The polypeptide is Bis(5'-nucleosyl)-tetraphosphatase, symmetrical (Chromobacterium violaceum (strain ATCC 12472 / DSM 30191 / JCM 1249 / CCUG 213 / NBRC 12614 / NCIMB 9131 / NCTC 9757 / MK)).